A 256-amino-acid polypeptide reads, in one-letter code: DNA repair protein RecO (256 aa).

The protein belongs to the RecO family.

In terms of biological role, involved in DNA repair and RecF pathway recombination. In Clostridium novyi (strain NT), this protein is DNA repair protein RecO.